The chain runs to 284 residues: Bifunctional protein FolD (284 aa).

NADP(+) contacts are provided by residues 165–167 (GRS), Ser190, and Ile231.

The protein belongs to the tetrahydrofolate dehydrogenase/cyclohydrolase family. Homodimer.

The catalysed reaction is (6R)-5,10-methylene-5,6,7,8-tetrahydrofolate + NADP(+) = (6R)-5,10-methenyltetrahydrofolate + NADPH. It carries out the reaction (6R)-5,10-methenyltetrahydrofolate + H2O = (6R)-10-formyltetrahydrofolate + H(+). Its pathway is one-carbon metabolism; tetrahydrofolate interconversion. Its function is as follows. Catalyzes the oxidation of 5,10-methylenetetrahydrofolate to 5,10-methenyltetrahydrofolate and then the hydrolysis of 5,10-methenyltetrahydrofolate to 10-formyltetrahydrofolate. This chain is Bifunctional protein FolD, found in Streptococcus thermophilus (strain ATCC BAA-491 / LMD-9).